The sequence spans 298 residues: Exosome complex component Rrp4 (298 aa).

The 69-residue stretch at 63–131 (GDVVIGKIKD…EVKKVKLGLK (69 aa)) folds into the S1 motif domain. One can recognise a KH domain in the interval 139-197 (RGGIIVDITPTKVPRLIGKKGSMINMIKDKTNCKIIVGQNGLVWVKGEEDMEQLTKDII). The interval 276 to 298 (KNKKDKPLSYGNNSGNSYILNNR) is disordered. Polar residues predominate over residues 285 to 298 (YGNNSGNSYILNNR).

This sequence belongs to the RRP4 family. In terms of assembly, component of the archaeal exosome complex. Forms a trimer of Rrp4 and/or Csl4 subunits. The trimer associates with a hexameric ring-like arrangement composed of 3 Rrp41-Rrp42 heterodimers.

It is found in the cytoplasm. Its function is as follows. Non-catalytic component of the exosome, which is a complex involved in RNA degradation. Increases the RNA binding and the efficiency of RNA degradation. Confers strong poly(A) specificity to the exosome. This is Exosome complex component Rrp4 from Methanobrevibacter smithii (strain ATCC 35061 / DSM 861 / OCM 144 / PS).